The following is a 187-amino-acid chain: UPF0301 protein HSM_1900 (187 aa).

The protein belongs to the UPF0301 (AlgH) family.

This chain is UPF0301 protein HSM_1900, found in Histophilus somni (strain 2336) (Haemophilus somnus).